Reading from the N-terminus, the 118-residue chain is Large ribosomal subunit protein bL20 (118 aa).

This sequence belongs to the bacterial ribosomal protein bL20 family.

Its function is as follows. Binds directly to 23S ribosomal RNA and is necessary for the in vitro assembly process of the 50S ribosomal subunit. It is not involved in the protein synthesizing functions of that subunit. The chain is Large ribosomal subunit protein bL20 from Sulfurovum sp. (strain NBC37-1).